A 253-amino-acid chain; its full sequence is tRNA pseudouridine synthase A (253 aa).

Aspartate 53 acts as the Nucleophile in catalysis. Tyrosine 111 provides a ligand contact to substrate.

The protein belongs to the tRNA pseudouridine synthase TruA family. In terms of assembly, homodimer.

It catalyses the reaction uridine(38/39/40) in tRNA = pseudouridine(38/39/40) in tRNA. In terms of biological role, formation of pseudouridine at positions 38, 39 and 40 in the anticodon stem and loop of transfer RNAs. The sequence is that of tRNA pseudouridine synthase A from Chlorobium luteolum (strain DSM 273 / BCRC 81028 / 2530) (Pelodictyon luteolum).